Reading from the N-terminus, the 313-residue chain is MSGGLTPDQAIDAIRGTGGAQPGCRALHAKGTLYRGTFTATRDAVMLSAAPHLDGSTVPALIRFSNGSGNPKQRDGAPGVRGMAVKFTLPDGSTTDVSAQTARLLVSSTPEGFIDLLKAMRPGLTTPLRLATHLLTHPRLLGALPLLREANRIPASYATTEYHGLHAFRWIAADGSARFVRYHLVPTAAEEYLSASDARGKDPDFLTDELAARLQDGPVRFDFRVQIAGPTDSTVDPSSAWQSTQIVTVGTVTITGPDTEREHGGDIVVFDPMRVTDGIEPSDDPVLRFRTLVYSASVKLRTGVDRGAQAPPV.

Histidine 28 is a catalytic residue. Position 294 (tyrosine 294) interacts with heme.

It belongs to the catalase family. As to quaternary structure, monomer. Heme is required as a cofactor.

In terms of biological role, has an organic peroxide-dependent peroxidase activity. Exhibits strong peroxidase activity using organic hydroperoxides as cosubstrates, weak peroxidase activity using hydrogen peroxide and negligible catalase activity. May have a role in elimination of reactive oxygen species, in particular by deactivating hydroperoxides. The chain is Catalase-related peroxidase from Mycolicibacterium paratuberculosis (strain ATCC BAA-968 / K-10) (Mycobacterium paratuberculosis).